A 306-amino-acid polypeptide reads, in one-letter code: Agmatinase (306 aa).

Histidine 126, aspartate 149, histidine 151, aspartate 153, aspartate 230, and aspartate 232 together coordinate Mn(2+).

The protein belongs to the arginase family. Agmatinase subfamily. Requires Mn(2+) as cofactor.

The enzyme catalyses agmatine + H2O = urea + putrescine. Its pathway is amine and polyamine biosynthesis; putrescine biosynthesis via agmatine pathway; putrescine from agmatine: step 1/1. In terms of biological role, catalyzes the formation of putrescine from agmatine. The protein is Agmatinase of Escherichia coli O1:K1 / APEC.